A 313-amino-acid polypeptide reads, in one-letter code: Probable cell division protein WhiA (313 aa).

The H-T-H motif DNA-binding region spans 274 to 308; sequence SLKELGELVPGGPISKSGVNHRLRKLNAYADELRA.

It belongs to the WhiA family.

Its function is as follows. Involved in cell division and chromosome segregation. The polypeptide is Probable cell division protein WhiA (Limosilactobacillus reuteri subsp. reuteri (strain JCM 1112) (Lactobacillus reuteri)).